The chain runs to 493 residues: Argininosuccinate lyase (493 aa).

Belongs to the lyase 1 family. Argininosuccinate lyase subfamily.

The protein localises to the cytoplasm. It catalyses the reaction 2-(N(omega)-L-arginino)succinate = fumarate + L-arginine. It functions in the pathway amino-acid biosynthesis; L-arginine biosynthesis; L-arginine from L-ornithine and carbamoyl phosphate: step 3/3. This is Argininosuccinate lyase from Methanospirillum hungatei JF-1 (strain ATCC 27890 / DSM 864 / NBRC 100397 / JF-1).